A 178-amino-acid chain; its full sequence is Translation initiation factor IF-3 (178 aa).

Belongs to the IF-3 family. Monomer.

It is found in the cytoplasm. IF-3 binds to the 30S ribosomal subunit and shifts the equilibrium between 70S ribosomes and their 50S and 30S subunits in favor of the free subunits, thus enhancing the availability of 30S subunits on which protein synthesis initiation begins. This is Translation initiation factor IF-3 from Nautilia profundicola (strain ATCC BAA-1463 / DSM 18972 / AmH).